A 226-amino-acid polypeptide reads, in one-letter code: 7-cyano-7-deazaguanine synthase (226 aa).

10-20 (FSGGQDSTTLA) contacts ATP. Cys190, Cys205, Cys208, and Cys211 together coordinate Zn(2+).

Belongs to the QueC family. Zn(2+) serves as cofactor.

It carries out the reaction 7-carboxy-7-deazaguanine + NH4(+) + ATP = 7-cyano-7-deazaguanine + ADP + phosphate + H2O + H(+). It participates in purine metabolism; 7-cyano-7-deazaguanine biosynthesis. Functionally, catalyzes the ATP-dependent conversion of 7-carboxy-7-deazaguanine (CDG) to 7-cyano-7-deazaguanine (preQ(0)). The polypeptide is 7-cyano-7-deazaguanine synthase (Helicobacter pylori (strain Shi470)).